Consider the following 265-residue polypeptide: Mlc titration factor A (265 aa).

Residues His-111, His-148, His-152, and Glu-211 each contribute to the Zn(2+) site.

This sequence belongs to the MtfA family. As to quaternary structure, interacts with Mlc. Zn(2+) serves as cofactor.

It is found in the cytoplasm. Involved in the modulation of the activity of the glucose-phosphotransferase system (glucose-PTS). Interacts with the transcriptional repressor Mlc, preventing its interaction with DNA and leading to the modulation of expression of genes regulated by Mlc, including ptsG, which encodes the PTS system glucose-specific EIICB component. Functionally, shows zinc-dependent metallopeptidase activity. In Escherichia coli O6:K15:H31 (strain 536 / UPEC), this protein is Mlc titration factor A.